A 123-amino-acid chain; its full sequence is Nitrogenase-stabilizing/protective protein NifW (123 aa).

Belongs to the NifW family. As to quaternary structure, homotrimer; associates with NifD.

Its function is as follows. May protect the nitrogenase Fe-Mo protein from oxidative damage. This chain is Nitrogenase-stabilizing/protective protein NifW, found in Rhodopseudomonas palustris (strain HaA2).